The primary structure comprises 60 residues: UPF0434 protein KPK_3615 (60 aa).

The protein belongs to the UPF0434 family.

The polypeptide is UPF0434 protein KPK_3615 (Klebsiella pneumoniae (strain 342)).